The sequence spans 322 residues: Beta-ketoacyl-[acyl-carrier-protein] synthase III (322 aa).

Residues Cys113 and His249 contribute to the active site. Positions 250 to 254 (QANVR) are ACP-binding. Asn279 is a catalytic residue.

Belongs to the thiolase-like superfamily. FabH family. As to quaternary structure, homodimer.

Its subcellular location is the cytoplasm. It catalyses the reaction malonyl-[ACP] + acetyl-CoA + H(+) = 3-oxobutanoyl-[ACP] + CO2 + CoA. It functions in the pathway lipid metabolism; fatty acid biosynthesis. Its function is as follows. Catalyzes the condensation reaction of fatty acid synthesis by the addition to an acyl acceptor of two carbons from malonyl-ACP. Catalyzes the first condensation reaction which initiates fatty acid synthesis and may therefore play a role in governing the total rate of fatty acid production. Possesses both acetoacetyl-ACP synthase and acetyl transacylase activities. Its substrate specificity determines the biosynthesis of branched-chain and/or straight-chain of fatty acids. In Anaplasma marginale (strain St. Maries), this protein is Beta-ketoacyl-[acyl-carrier-protein] synthase III.